A 133-amino-acid polypeptide reads, in one-letter code: Ribosome-binding factor A (133 aa).

Belongs to the RbfA family. In terms of assembly, monomer. Binds 30S ribosomal subunits, but not 50S ribosomal subunits or 70S ribosomes.

Its subcellular location is the cytoplasm. One of several proteins that assist in the late maturation steps of the functional core of the 30S ribosomal subunit. Associates with free 30S ribosomal subunits (but not with 30S subunits that are part of 70S ribosomes or polysomes). Required for efficient processing of 16S rRNA. May interact with the 5'-terminal helix region of 16S rRNA. The protein is Ribosome-binding factor A of Enterobacter sp. (strain 638).